We begin with the raw amino-acid sequence, 96 residues long: Putative pterin-4-alpha-carbinolamine dehydratase (96 aa).

This sequence belongs to the pterin-4-alpha-carbinolamine dehydratase family.

It catalyses the reaction (4aS,6R)-4a-hydroxy-L-erythro-5,6,7,8-tetrahydrobiopterin = (6R)-L-erythro-6,7-dihydrobiopterin + H2O. The protein is Putative pterin-4-alpha-carbinolamine dehydratase of Prochlorococcus marinus (strain MIT 9303).